A 434-amino-acid chain; its full sequence is Tryptophan--tRNA ligase (434 aa).

ATP-binding positions include 14–16 and 22–23; these read TTS and GN. Residues 15–23 carry the 'HIGH' region motif; it reads TSGTPHLGN. Asp147 is a binding site for L-tryptophan. Residues 159 to 161, Leu199, and 206 to 210 contribute to the ATP site; these read GRD and KMSKS. Residues 206–210 carry the 'KMSKS' region motif; it reads KMSKS.

This sequence belongs to the class-I aminoacyl-tRNA synthetase family. As to quaternary structure, homodimer.

The protein localises to the cytoplasm. The catalysed reaction is tRNA(Trp) + L-tryptophan + ATP = L-tryptophyl-tRNA(Trp) + AMP + diphosphate + H(+). In terms of biological role, catalyzes the attachment of tryptophan to tRNA(Trp). The sequence is that of Tryptophan--tRNA ligase from Xylella fastidiosa (strain 9a5c).